Here is a 142-residue protein sequence, read N- to C-terminus: Peptidyl-prolyl cis-trans isomerase FKBP2 (142 aa).

The first 21 residues, 1–21 (MRLSWFRVLTVLSICLSAVAT), serve as a signal peptide directing secretion. One can recognise a PPIase FKBP-type domain in the interval 49-137 (GDVLHMHYTG…VFEVELLKIE (89 aa)). The Prevents secretion from ER motif lies at 139-142 (RTEL).

The protein belongs to the FKBP-type PPIase family. FKBP2 subfamily. As to quaternary structure, interacts with ARFGEF1/BIG1 and the C-terminal of EPB41L2. In terms of tissue distribution, T-cells and thymus.

The protein localises to the endoplasmic reticulum membrane. It carries out the reaction [protein]-peptidylproline (omega=180) = [protein]-peptidylproline (omega=0). Its activity is regulated as follows. Inhibited by both FK506 and rapamycin. PPIases accelerate the folding of proteins. It catalyzes the cis-trans isomerization of proline imidic peptide bonds in oligopeptides. The polypeptide is Peptidyl-prolyl cis-trans isomerase FKBP2 (FKBP2) (Homo sapiens (Human)).